A 380-amino-acid chain; its full sequence is Flap endonuclease 1 (380 aa).

The N-domain stretch occupies residues 1–104 (MGIQGLAKLI…GELAKRSERR (104 aa)). At Arg-19 the chain carries Symmetric dimethylarginine; by PRMT5. Mg(2+) is bound at residue Asp-34. Arg-47 and Arg-70 together coordinate DNA. The residue at position 80 (Lys-80) is an N6-acetyllysine. Residue Asp-86 participates in Mg(2+) binding. Symmetric dimethylarginine; by PRMT5 occurs at positions 100 and 104. The interval 122-253 (EVEKFTKRLV…KRAVDLIQKH (132 aa)) is I-domain. Mg(2+) contacts are provided by Glu-158, Glu-160, Asp-179, and Asp-181. Glu-158 is a binding site for DNA. Ser-187 carries the post-translational modification Phosphoserine; by CDK2. Position 192 is a symmetric dimethylarginine; by PRMT5 (Arg-192). Ser-197 bears the Phosphoserine mark. Gly-231 and Asp-233 together coordinate DNA. Residue Asp-233 coordinates Mg(2+). Phosphoserine is present on residues Ser-255, Ser-293, and Ser-335. A disordered region spans residues 327-380 (RLSKSRQGSTQGRLDDFFKVTGSLSSAKRKEPEPKGAAKKKAKTGAAGKFKRGK). Position 336 is a phosphothreonine (Thr-336). The tract at residues 336–344 (TQGRLDDFF) is interaction with PCNA. Lys-354, Lys-375, Lys-377, and Lys-380 each carry N6-acetyllysine. The span at 363–380 (AAKKKAKTGAAGKFKRGK) shows a compositional bias: basic residues.

Belongs to the XPG/RAD2 endonuclease family. FEN1 subfamily. Interacts with PCNA. Three molecules of FEN1 bind to one PCNA trimer with each molecule binding to one PCNA monomer. PCNA stimulates the nuclease activity without altering cleavage specificity. The C-terminal domain binds EP300; can bind simultaneously to both PCNA and EP300. Interacts with DDX11; this interaction is direct and increases flap endonuclease activity of FEN1. Interacts with WDR4; regulating its endonuclease activity. Interacts with POLB. The cofactor is Mg(2+). In terms of processing, acetylated by EP300. Acetylation inhibits both endonuclease and exonuclease activity. Acetylation also reduces DNA-binding activity but does not affect interaction with PCNA or EP300. Phosphorylation upon DNA damage induces relocalization to the nuclear plasma. Phosphorylation at Ser-187 by CDK2 occurs during late S-phase and results in dissociation from PCNA. Post-translationally, methylation at Arg-192 by PRMT5 impedes Ser-187 phosphorylation and increases interaction with PCNA.

The protein localises to the nucleus. It localises to the nucleolus. Its subcellular location is the nucleoplasm. The protein resides in the mitochondrion. In terms of biological role, structure-specific nuclease with 5'-flap endonuclease and 5'-3' exonuclease activities involved in DNA replication and repair. During DNA replication, cleaves the 5'-overhanging flap structure that is generated by displacement synthesis when DNA polymerase encounters the 5'-end of a downstream Okazaki fragment. It enters the flap from the 5'-end and then tracks to cleave the flap base, leaving a nick for ligation. Also involved in the long patch base excision repair (LP-BER) pathway, by cleaving within the apurinic/apyrimidinic (AP) site-terminated flap. Acts as a genome stabilization factor that prevents flaps from equilibrating into structures that lead to duplications and deletions. Also possesses 5'-3' exonuclease activity on nicked or gapped double-stranded DNA, and exhibits RNase H activity. Also involved in replication and repair of rDNA and in repairing mitochondrial DNA. This Bos taurus (Bovine) protein is Flap endonuclease 1.